The sequence spans 406 residues: Methyltransferase cfoD (406 aa).

2 residues coordinate S-adenosyl-L-methionine: Asp-270 and Arg-312. The Proton acceptor role is filled by His-315.

It belongs to the class I-like SAM-binding methyltransferase superfamily. Cation-independent O-methyltransferase family.

It participates in secondary metabolite biosynthesis; flavonoid biosynthesis. Methyltransferase; part of the gene cluster that mediates the biosynthesis of chlorflavonin, a fungal flavonoid with acetolactate synthase inhibitory activity. Within the pathway, cfoD is responsible for the methylation at position C3-OH of flavonoid. The pathway begins with the PKS-NRPS hybrid synthetase cfoA that uses benzoic acid or p-hydroxybenzoic acid as a starter unit with four rounds of chain elongation using malonyl-CoA to form the chalcone skeleton. Then, a new type of chalcone isomerase, cfoK, catalyzes the conversion of the chalcone into a flavanone by a histidine-mediated oxa-Michael addition mechanism. The desaturation of flavanone to flavone is catalyzed by a new type of flavone synthase, the flavin mononucleotide (FMN)-dependent oxidoreductase cfoJ. Monooxygenases cfoF, cfoG, and P450 cfoH are responsible for the hydroxylation of the flavonoid skeleton at sites C3, C8, and C2', respectively. Like cfoF, the dehydratase cfoI also plays a role in the hydroxylation of position C3. Methyltransferases cfoB, cfoC, and cfoD then catalyze the methylation of C7-OH, C8-OH, and C3-OH, respectively. Finally, the monooxygenase cfoE is responsible for the chlorination of flavonoid at position C3'. The sequence is that of Methyltransferase cfoD from Aspergillus candidus.